Reading from the N-terminus, the 90-residue chain is Small ribosomal subunit protein bS20 (90 aa).

It belongs to the bacterial ribosomal protein bS20 family.

Its function is as follows. Binds directly to 16S ribosomal RNA. This chain is Small ribosomal subunit protein bS20, found in Nautilia profundicola (strain ATCC BAA-1463 / DSM 18972 / AmH).